A 549-amino-acid polypeptide reads, in one-letter code: Small ribosomal subunit protein bS1 (549 aa).

S1 motif domains follow at residues 21–87, 105–171, 192–260, 277–347, 364–434, and 451–512; these read GSIV…LSRE, KATV…VSRR, GSEV…LGLK, NSKL…LGLK, GDKV…LGIK, and GAVV…LSVK.

Belongs to the bacterial ribosomal protein bS1 family.

Its function is as follows. Binds mRNA; thus facilitating recognition of the initiation point. It is needed to translate mRNA with a short Shine-Dalgarno (SD) purine-rich sequence. This is Small ribosomal subunit protein bS1 (rpsA) from Haemophilus influenzae (strain ATCC 51907 / DSM 11121 / KW20 / Rd).